Reading from the N-terminus, the 253-residue chain is Testis-expressed protein 47 (253 aa).

This Rattus norvegicus (Rat) protein is Testis-expressed protein 47.